The primary structure comprises 198 residues: Carnitine operon protein CaiE (198 aa).

The segment at 174-198 is disordered; the sequence is KPLTQAEENRPRLKGTTDVKPKSAQ. The segment covering 180 to 198 has biased composition (basic and acidic residues); that stretch reads EENRPRLKGTTDVKPKSAQ.

It belongs to the transferase hexapeptide repeat family.

It functions in the pathway amine and polyamine metabolism; carnitine metabolism. In terms of biological role, overproduction of CaiE stimulates the activity of CaiB and CaiD. This chain is Carnitine operon protein CaiE, found in Salmonella dublin (strain CT_02021853).